A 298-amino-acid chain; its full sequence is Chromatin modification-related protein YNG2 (298 aa).

The stretch at 20–86 forms a coiled coil; sequence EVRHLLEEIK…KLVQKLQKEK (67 aa). Residues 140-158 show a composition bias toward polar residues; sequence GFSDSASATPTPRNGSSAT. The disordered stretch occupies residues 140–206; that stretch reads GFSDSASATP…EEIEDPLPYE (67 aa). Low complexity predominate over residues 174–188; it reads VKGASSSSAQSSSAS. The segment at 237-288 adopts a PHD-type zinc-finger fold; it reads NLYCFCQRVSFGEMIGCDNEDCKYEWFHWSCVGITSPPKDDEIWYCPDCASK. Residues Cys240, Cys242, Cys253, Cys258, His264, Cys267, Cys282, and Cys285 each coordinate Zn(2+).

The protein belongs to the ING family. Interacts with H3K4me3 and to a lesser extent with H3K4me2. Component of the NuA4 histone acetyltransferase complex.

Its subcellular location is the nucleus. In terms of biological role, component of the NuA4 histone acetyltransferase complex which is involved in transcriptional activation of selected genes principally by acetylation of nucleosomal histone H4 and H2A. The NuA4 complex is also involved in DNA repair. Involved in cell cycle progression and meiosis. The protein is Chromatin modification-related protein YNG2 (YNG2) of Candida albicans (strain SC5314 / ATCC MYA-2876) (Yeast).